The chain runs to 632 residues: Transcription factor asR4 (632 aa).

Positions 26–52 (CDSCNKSKTKCPGGNPCPLCQCSGIRC) form a DNA-binding region, zn(2)-C6 fungal-type. The span at 101-111 (HISSNPSPVGS) shows a compositional bias: polar residues. Disordered regions lie at residues 101–129 (HISSNPSPVGSQSQQQQHPQQAGQQQQQQ), 270–311 (SNEY…GDGH), and 324–356 (TSASSIVEQQSIPTSPVTVAPMSPAKSSSVPRT). Positions 112 to 129 (QSQQQQHPQQAGQQQQQQ) are enriched in low complexity. Polar residues-rich tracts occupy residues 270-286 (SNEYSTSSNSKPSTTDD), 294-306 (PDSSTTHRPSSSV), and 329-340 (IVEQQSIPTSPV).

It localises to the nucleus. Functionally, transcription factor; part of the gene cluster that mediates the biosynthesis of xenovulene A, an unusual meroterpenoid that has potent inhibitory effects on the human gamma-aminobutyrate A (GABAA) benzodiazepine receptor. The chain is Transcription factor asR4 from Sarocladium schorii (Acremonium strictum (strain IMI 501407)).